The following is a 197-amino-acid chain: Phosphoheptose isomerase (197 aa).

Residues 34–196 (MVQCLLGGNK…DRTLFPQDDQ (163 aa)) enclose the SIS domain. Residue 49 to 51 (NGG) coordinates substrate. Positions 58 and 62 each coordinate Zn(2+). Substrate is bound by residues glutamate 62, 91-92 (ND), 117-119 (STS), serine 122, and glutamine 172. Zn(2+) is bound by residues glutamine 172 and histidine 180.

The protein belongs to the SIS family. GmhA subfamily. Homotetramer. Requires Zn(2+) as cofactor.

Its subcellular location is the cytoplasm. It catalyses the reaction 2 D-sedoheptulose 7-phosphate = D-glycero-alpha-D-manno-heptose 7-phosphate + D-glycero-beta-D-manno-heptose 7-phosphate. It participates in carbohydrate biosynthesis; D-glycero-D-manno-heptose 7-phosphate biosynthesis; D-glycero-alpha-D-manno-heptose 7-phosphate and D-glycero-beta-D-manno-heptose 7-phosphate from sedoheptulose 7-phosphate: step 1/1. In terms of biological role, catalyzes the isomerization of sedoheptulose 7-phosphate in D-glycero-D-manno-heptose 7-phosphate. This chain is Phosphoheptose isomerase, found in Shewanella loihica (strain ATCC BAA-1088 / PV-4).